We begin with the raw amino-acid sequence, 277 residues long: Carbonyl reductase [NADPH] 3 (277 aa).

An N-acetylserine modification is found at serine 2. NADP(+)-binding positions include 10–34, 38–42, 63–64, and asparagine 90; these read VTGA…GDVV, RDVAR, and DI. Serine 30 is subject to Phosphoserine. A substrate-binding site is contributed by serine 140. Tyrosine 194 (proton acceptor) is an active-site residue. NADP(+) is bound by residues 194–198 and aspartate 239; that span reads YGVSK.

It belongs to the short-chain dehydrogenases/reductases (SDR) family. In terms of tissue distribution, detected in ovary, pancreas, intestine, colon, kidney, brain, thymus, lung, heart, liver, spleen, leukocyte, prostate and testis.

Its subcellular location is the cytoplasm. It carries out the reaction a secondary alcohol + NADP(+) = a ketone + NADPH + H(+). It catalyses the reaction a quinone + NADPH + H(+) = a quinol + NADP(+). In terms of biological role, catalyzes the NADPH-dependent reduction of carbonyl compounds to their corresponding alcohols. Has low NADPH-dependent oxidoreductase activity. Acts on several orthoquinones, acts as well on non-quinone compounds, such as isatin or on the anticancer drug oracin. Best substrates for CBR3 is 1,2- naphthoquinone, hence could play a role in protection against cytotoxicity of exogenous quinones. Exerts activity toward ortho-quinones but not paraquinones. No endogenous substrate for CBR3 except isatin has been identified. The chain is Carbonyl reductase [NADPH] 3 from Homo sapiens (Human).